Reading from the N-terminus, the 102-residue chain is Large ribosomal subunit protein uL24 (102 aa).

This sequence belongs to the universal ribosomal protein uL24 family. As to quaternary structure, part of the 50S ribosomal subunit.

Functionally, one of two assembly initiator proteins, it binds directly to the 5'-end of the 23S rRNA, where it nucleates assembly of the 50S subunit. One of the proteins that surrounds the polypeptide exit tunnel on the outside of the subunit. This chain is Large ribosomal subunit protein uL24, found in Herpetosiphon aurantiacus (strain ATCC 23779 / DSM 785 / 114-95).